A 511-amino-acid chain; its full sequence is BAR/IMD domain-containing adapter protein 2-like 1 (511 aa).

Residues 1-249 (MSRGPEEVNR…MNMIEEIKTP (249 aa)) form the IMD domain. Positions 115-154 (MNATLKRYQTEHKNKLESLEKSQAELKKIRRKSQGSRNAL) form a coiled coil. T248 and T257 each carry phosphothreonine. Phosphoserine is present on residues S261 and S281. The tract at residues 302–328 (NNPATAAPNSQRVNNSTGTSEDPSLQR) is disordered. The span at 303-328 (NPATAAPNSQRVNNSTGTSEDPSLQR) shows a compositional bias: polar residues. 2 positions are modified to phosphoserine: S331 and S354. In terms of domain architecture, SH3 spans 339-402 (MKKQKVKTIF…PSSYTKLLEE (64 aa)). Position 412 is a phosphothreonine (T412). Phosphoserine is present on residues S414, S420, and S422. Positions 451–511 (RRADSARTTS…TNDRSAPIIR (61 aa)) are disordered. The segment at 483–511 (PPFLSGENPFATVKLRPTVTNDRSAPIIR) is binds F-actin.

In terms of assembly, interacts with RAC1. Binds to F-actin. Interacts with FASLG. Interacts (via SH3 domain) with E.coli effector protein EspF(U) (via PXXP motifs). Identified in a complex containing at least WASL, BAIAP2L1 and E.coli EspF(U). Interacts with E.coli intimin receptor Tir. In terms of processing, phosphorylated on tyrosine in response to insulin.

Its subcellular location is the cytoplasm. The protein localises to the cytoskeleton. In terms of biological role, may function as adapter protein. Involved in the formation of clusters of actin bundles. Plays a role in the reorganization of the actin cytoskeleton in response to bacterial infection. The polypeptide is BAR/IMD domain-containing adapter protein 2-like 1 (BAIAP2L1) (Homo sapiens (Human)).